A 309-amino-acid chain; its full sequence is DnaJ homolog subfamily B member 7 (309 aa).

The region spanning 3-69 (DYYEVLGLQR…EKRDIYDKYG (67 aa)) is the J domain. The interval 282-309 (FSAGVKEGGKRKKKKRKEVQKKSTKRNC) is disordered. The segment covering 290-309 (GKRKKKKRKEVQKKSTKRNC) has biased composition (basic residues).

Functionally, probably acts as a co-chaperone. This is DnaJ homolog subfamily B member 7 (DNAJB7) from Homo sapiens (Human).